The following is a 579-amino-acid chain: Thiol:disulfide interchange protein DsbD (579 aa).

The signal sequence occupies residues 1–16 (MKKLFLFFTLIFTAFA). 2 disulfides stabilise this stretch: Cys-124-Cys-129 and Cys-193-Cys-315. A run of 8 helical transmembrane segments spans residues 178 to 198 (IFGF…LPML), 230 to 250 (LTYT…QIAL), 254 to 274 (YVMI…FGLF), 296 to 316 (GAFG…SPCT), 337 to 357 (AATL…ITLF), 376 to 396 (FGFV…PEVW), 397 to 417 (EPRL…LQMS), and 420 to 440 (GFGY…VQPL). In terms of domain architecture, Thioredoxin spans 449–579 (TTTQSAVENK…AFSNWLKALH (131 aa)). Cys-495 and Cys-498 form a disulfide bridge.

This sequence belongs to the thioredoxin family. DsbD subfamily.

It localises to the cell inner membrane. The catalysed reaction is [protein]-dithiol + NAD(+) = [protein]-disulfide + NADH + H(+). It carries out the reaction [protein]-dithiol + NADP(+) = [protein]-disulfide + NADPH + H(+). Its function is as follows. Required to facilitate the formation of correct disulfide bonds in some periplasmic proteins and for the assembly of the periplasmic c-type cytochromes. Acts by transferring electrons from cytoplasmic thioredoxin to the periplasm. This transfer involves a cascade of disulfide bond formation and reduction steps. This is Thiol:disulfide interchange protein DsbD from Haemophilus influenzae (strain PittEE).